The sequence spans 808 residues: Sucrose synthase 2 (808 aa).

The residue at position 10 (S10) is a Phosphoserine; by CPK. The segment at 272 to 749 (MMFNVVILSP…GLQRIYEKYT (478 aa)) is GT-B glycosyltransferase.

This sequence belongs to the glycosyltransferase 1 family. Plant sucrose synthase subfamily. As to quaternary structure, homotetramer or heterotetramer with SUS1. Phosphorylated at Ser-10 by CPK23 in developing seeds. As to expression, predominantly expressed in the leaf tissues. Expressed in seeds, and at lower levels in roots. Expressed in leaf mesophyll and phloem (at protein level).

It carries out the reaction an NDP-alpha-D-glucose + D-fructose = a ribonucleoside 5'-diphosphate + sucrose + H(+). Its activity is regulated as follows. Activated by phosphorylation at Ser-10 by CPK23. Functionally, sucrose-cleaving enzyme that provides UDP-glucose and fructose for various metabolic pathways. Functions in developing seeds by supplying substrates for the biosynthesis of storage products. This Oryza sativa subsp. japonica (Rice) protein is Sucrose synthase 2 (SUS2).